Here is a 299-residue protein sequence, read N- to C-terminus: ATP phosphoribosyltransferase (299 aa).

The protein belongs to the ATP phosphoribosyltransferase family. Long subfamily. Mg(2+) serves as cofactor.

It localises to the cytoplasm. The enzyme catalyses 1-(5-phospho-beta-D-ribosyl)-ATP + diphosphate = 5-phospho-alpha-D-ribose 1-diphosphate + ATP. It functions in the pathway amino-acid biosynthesis; L-histidine biosynthesis; L-histidine from 5-phospho-alpha-D-ribose 1-diphosphate: step 1/9. With respect to regulation, feedback inhibited by histidine. Functionally, catalyzes the condensation of ATP and 5-phosphoribose 1-diphosphate to form N'-(5'-phosphoribosyl)-ATP (PR-ATP). Has a crucial role in the pathway because the rate of histidine biosynthesis seems to be controlled primarily by regulation of HisG enzymatic activity. The sequence is that of ATP phosphoribosyltransferase from Campylobacter jejuni subsp. jejuni serotype O:2 (strain ATCC 700819 / NCTC 11168).